The following is a 350-amino-acid chain: Nicotinate-nucleotide--dimethylbenzimidazole phosphoribosyltransferase (350 aa).

Residue glutamate 317 is the Proton acceptor of the active site.

The protein belongs to the CobT family.

It carries out the reaction 5,6-dimethylbenzimidazole + nicotinate beta-D-ribonucleotide = alpha-ribazole 5'-phosphate + nicotinate + H(+). It functions in the pathway nucleoside biosynthesis; alpha-ribazole biosynthesis; alpha-ribazole from 5,6-dimethylbenzimidazole: step 1/2. Its function is as follows. Catalyzes the synthesis of alpha-ribazole-5'-phosphate from nicotinate mononucleotide (NAMN) and 5,6-dimethylbenzimidazole (DMB). The protein is Nicotinate-nucleotide--dimethylbenzimidazole phosphoribosyltransferase of Shewanella sp. (strain MR-4).